The sequence spans 232 residues: Orotidine 5'-phosphate decarboxylase (232 aa).

Substrate contacts are provided by residues aspartate 11, lysine 33, 60–69 (DLKLYDIPNT), threonine 119, arginine 180, glutamine 189, glycine 209, and arginine 210. Residue lysine 62 is the Proton donor of the active site.

This sequence belongs to the OMP decarboxylase family. Type 1 subfamily. Homodimer.

The enzyme catalyses orotidine 5'-phosphate + H(+) = UMP + CO2. Its pathway is pyrimidine metabolism; UMP biosynthesis via de novo pathway; UMP from orotate: step 2/2. Functionally, catalyzes the decarboxylation of orotidine 5'-monophosphate (OMP) to uridine 5'-monophosphate (UMP). The polypeptide is Orotidine 5'-phosphate decarboxylase (Wigglesworthia glossinidia brevipalpis).